Here is a 1158-residue protein sequence, read N- to C-terminus: MTLHAYLGRAGTGKSTKMLTEIKQKMKADPLGDPIILIAPTQSTFQLEQAFVNDPELNGSLRTEVLHFERLSHRIFQEVGSYSEQKLSKAATEMMIYNIVQEQQKYLKLYQSQAKYYGFSEKLTEQIQDFKKYAVTPEHLEHFIADKNMQTRTKNKLEDIALIYREFEQRIQNEFITGEDSLQYFIDCMPKSEWLKRADIYIDGFHNFSTIEYLIIKGLIKYAKSVTIILTTDGNHDQFSLFRKPSEVLRHIEEIANELNISIERQYFNQLYRFNNQDLKHLEQEFDVLQINRVACQGHINILESATMREEINEIARRIIVDIRDKQLRYQDIAILYRDESYAYLFDSILPLYNIPYNIDTKRSMTHHPVMEMIRSLIEVIQSNWQVNPMLRLLKTDVLTASYLKSAYLVDLLENFVLERGIYGKRWLDDELFNVEHFSKMGRKAHKLTEDERNTFEQVVKLKKDVIDKILHFEKQMSQAETVKDFATAFYESMEYFELPNQLMTERDELDLNGNHEKAEEIDQIWNGLIQILDDLVLVFGDEPMSMERFLEVFDIGLEQLEFVMIPQTLDQVSIGTMDLAKVDNKQHVFLVGMNDGTMPQPVTASSLITDEEKKYFEQQANVELSPTSDILQMDEAFVCYIAMTRARQDVTFSYSLMGSSGDDKEISPFLNQIQSLFNQLEITNIPQYHEVNPLSLMQHAKQTKITLFEALRAWLYDEIVADSWLDAYQVIRDSDHLNQGLDYLMSALTFDNETVKLGETLSKDLYGKEINASVSRFEGYQQCPFKHYASHGLKLNERTKYELQNFDLGDIFHSVLKYISERINGDFKQLDLKKIRQLTNEALEEILPKVQFNLLNSSAYYRYLSRRIGAIVETTLSALKYQGTYSKFMPKHFETSFRRKPRTNDELIAQTLTTTQGIPINIRGQIDRIDTYTKNDTSFVNIIDYKSSEGSATLDLTKVYYGMQMQMMTYMDIVLQNKQRLGLTDIVKPGGLLYFHVHEPRIKFKSWSDIDEDKLEQDLIKKFKLSGLVNADQTVIDALDIRLEPKFTSDIVPVGLNKDGSLSKRGSQVADEATIYKFIQHNKENFIETASNIMDGHTEVAPLKYKQKLPCAFCSYQSVCHVDGMIDSKRYRTVDETINPIEAIQNININDEFGGEQ.

The UvrD-like helicase ATP-binding domain maps to 1–275; sequence MTLHAYLGRA…QYFNQLYRFN (275 aa). 8–15 serves as a coordination point for ATP; it reads GRAGTGKS. Residues 269–583 form the UvrD-like helicase C-terminal domain; it reads NQLYRFNNQD…SIGTMDLAKV (315 aa). 4 residues coordinate [4Fe-4S] cluster: C784, C1112, C1115, and C1121.

Belongs to the helicase family. AddB/RexB type 1 subfamily. In terms of assembly, heterodimer of AddA and AddB. Mg(2+) serves as cofactor. The cofactor is [4Fe-4S] cluster.

The heterodimer acts as both an ATP-dependent DNA helicase and an ATP-dependent, dual-direction single-stranded exonuclease. Recognizes the chi site generating a DNA molecule suitable for the initiation of homologous recombination. The AddB subunit has 5' -&gt; 3' nuclease activity but not helicase activity. The polypeptide is ATP-dependent helicase/deoxyribonuclease subunit B (Staphylococcus aureus (strain MW2)).